The following is a 192-amino-acid chain: Beta-glucosidase (192 aa).

This sequence belongs to the glycosyl hydrolase 3 family.

It carries out the reaction Hydrolysis of terminal, non-reducing beta-D-glucosyl residues with release of beta-D-glucose.. It participates in glycan metabolism; cellulose degradation. The chain is Beta-glucosidase from Schizophyllum commune (Split gill fungus).